A 51-amino-acid chain; its full sequence is Large ribosomal subunit protein bL33 (51 aa).

The protein belongs to the bacterial ribosomal protein bL33 family.

This Nitrosococcus oceani (strain ATCC 19707 / BCRC 17464 / JCM 30415 / NCIMB 11848 / C-107) protein is Large ribosomal subunit protein bL33.